The primary structure comprises 506 residues: Probable Xaa-Pro aminopeptidase PAAG_05466 (506 aa).

Mn(2+) contacts are provided by Asp-285, Asp-296, Glu-433, and Glu-471.

Belongs to the peptidase M24B family. The cofactor is Mn(2+).

The catalysed reaction is Release of any N-terminal amino acid, including proline, that is linked to proline, even from a dipeptide or tripeptide.. In terms of biological role, catalyzes the removal of a penultimate prolyl residue from the N-termini of peptides. This chain is Probable Xaa-Pro aminopeptidase PAAG_05466, found in Paracoccidioides lutzii (strain ATCC MYA-826 / Pb01) (Paracoccidioides brasiliensis).